Here is an 865-residue protein sequence, read N- to C-terminus: Xylosyltransferase 2 (865 aa).

Residues 1-15 lie on the Cytoplasmic side of the membrane; the sequence is MVASARVQKLVRRYK. The helical; Signal-anchor for type II membrane protein transmembrane segment at 16 to 36 threads the bilayer; sequence LAIATALAILLLQGLVVWSFS. At 37–865 the chain is on the lumenal side; it reads GLEEDEAGEK…GPVKADGRLR (829 aa). The disordered stretch occupies residues 41–157; the sequence is DEAGEKGRQR…EGAPQPTDNG (117 aa). Residues 53–65 show a composition bias toward basic and acidic residues; the sequence is RPLDPGEGSKDTD. Over residues 73–82 the composition is skewed to basic residues; that stretch reads STGRRHGRWR. N122 carries an N-linked (GlcNAc...) asparagine glycan. Low complexity predominate over residues 125–137; sequence GAAAGEALVGAAG. 4 disulfides stabilise this stretch: C162/C190, C206/C448, C467/C480, and C469/C478. UDP-alpha-D-xylose-binding positions include V239, D267, and 296-298; that span reads TIW. N-linked (GlcNAc...) asparagine glycosylation is present at N327. Residue 400–401 participates in UDP-alpha-D-xylose binding; the sequence is DW. Residues S481 and 504 to 505 contribute to the UDP-alpha-D-xylose site; that span reads RK. 2 disulfide bridges follow: C581-C833 and C826-C839. N-linked (GlcNAc...) asparagine glycosylation occurs at N683. The segment at 846-865 is disordered; sequence SLSPDPKSELGPVKADGRLR.

This sequence belongs to the glycosyltransferase 14 family. XylT subfamily. Monomer. Mg(2+) serves as cofactor. It depends on Mn(2+) as a cofactor. Post-translationally, contains disulfide bonds. Widely expressed. Expressed at higher level in kidney and pancreas.

It localises to the golgi apparatus membrane. Its subcellular location is the secreted. The catalysed reaction is UDP-alpha-D-xylose + L-seryl-[protein] = 3-O-(beta-D-xylosyl)-L-seryl-[protein] + UDP + H(+). The protein operates within glycan metabolism; chondroitin sulfate biosynthesis. It functions in the pathway glycan metabolism; heparan sulfate biosynthesis. Catalyzes the first step in the biosynthesis of chondroitin sulfate, heparan sulfate and dermatan sulfate proteoglycans, such as DCN. Transfers D-xylose from UDP-D-xylose to specific serine residues of the core protein. This chain is Xylosyltransferase 2 (XYLT2), found in Homo sapiens (Human).